The primary structure comprises 276 residues: Lysosome-associated membrane glycoprotein 5 (276 aa).

The signal sequence occupies residues methionine 1–alanine 27. The Extracellular portion of the chain corresponds to glutamate 28–glutamate 231. 3 N-linked (GlcNAc...) asparagine glycosylation sites follow: asparagine 33, asparagine 51, and asparagine 100. Residues threonine 232–tyrosine 252 traverse the membrane as a helical segment. The Cytoplasmic segment spans residues histidine 253–glycine 276.

It belongs to the LAMP family. Post-translationally, glycosylated.

It is found in the cytoplasmic vesicle membrane. The protein localises to the cell membrane. It localises to the cell projection. The protein resides in the dendrite. Its subcellular location is the cytoplasmic vesicle. It is found in the secretory vesicle. The protein localises to the synaptic vesicle membrane. It localises to the growth cone membrane. The protein resides in the early endosome membrane. Its subcellular location is the recycling endosome. It is found in the endoplasmic reticulum-Golgi intermediate compartment membrane. The protein localises to the endosome membrane. In terms of biological role, plays a role in short-term synaptic plasticity in a subset of GABAergic neurons in the brain. The chain is Lysosome-associated membrane glycoprotein 5 (lamp5) from Xenopus tropicalis (Western clawed frog).